The chain runs to 333 residues: S-adenosylmethionine decarboxylase proenzyme (333 aa).

Phenylalanine 7 is a binding site for substrate. Residues glutamate 8 and glutamate 11 contribute to the active site. Position 67 (glutamate 67) interacts with substrate. Catalysis depends on serine 68, which acts as the Schiff-base intermediate with substrate; via pyruvic acid. Serine 68 carries the pyruvic acid (Ser); by autocatalysis modification. Cysteine 82 functions as the Proton donor; for catalytic activity in the catalytic mechanism. Phenylalanine 223 is a substrate binding site. Catalysis depends on proton acceptor; for processing activity residues serine 229 and histidine 243. Glutamate 247 contacts substrate. Serine 298 bears the Phosphoserine mark.

Belongs to the eukaryotic AdoMetDC family. In terms of assembly, heterotetramer of two alpha and two beta chains. Pyruvate is required as a cofactor. Is synthesized initially as an inactive proenzyme. Formation of the active enzyme involves a self-maturation process in which the active site pyruvoyl group is generated from an internal serine residue via an autocatalytic post-translational modification. Two non-identical subunits are generated from the proenzyme in this reaction, and the pyruvate is formed at the N-terminus of the alpha chain, which is derived from the carboxyl end of the proenzyme. The post-translation cleavage follows an unusual pathway, termed non-hydrolytic serinolysis, in which the side chain hydroxyl group of the serine supplies its oxygen atom to form the C-terminus of the beta chain, while the remainder of the serine residue undergoes an oxidative deamination to produce ammonia and the pyruvoyl group blocking the N-terminus of the alpha chain.

It carries out the reaction S-adenosyl-L-methionine + H(+) = S-adenosyl 3-(methylsulfanyl)propylamine + CO2. It functions in the pathway amine and polyamine biosynthesis; S-adenosylmethioninamine biosynthesis; S-adenosylmethioninamine from S-adenosyl-L-methionine: step 1/1. Essential for biosynthesis of the polyamines spermidine and spermine. Promotes maintenance and self-renewal of embryonic stem cells, by maintaining spermine levels. The protein is S-adenosylmethionine decarboxylase proenzyme (Amd1) of Rattus norvegicus (Rat).